Reading from the N-terminus, the 257-residue chain is Tryptophan synthase alpha chain (257 aa).

Residues E47 and D58 each act as proton acceptor in the active site.

The protein belongs to the TrpA family. As to quaternary structure, tetramer of two alpha and two beta chains.

The catalysed reaction is (1S,2R)-1-C-(indol-3-yl)glycerol 3-phosphate + L-serine = D-glyceraldehyde 3-phosphate + L-tryptophan + H2O. The protein operates within amino-acid biosynthesis; L-tryptophan biosynthesis; L-tryptophan from chorismate: step 5/5. Functionally, the alpha subunit is responsible for the aldol cleavage of indoleglycerol phosphate to indole and glyceraldehyde 3-phosphate. This Listeria welshimeri serovar 6b (strain ATCC 35897 / DSM 20650 / CCUG 15529 / CIP 8149 / NCTC 11857 / SLCC 5334 / V8) protein is Tryptophan synthase alpha chain.